Here is a 636-residue protein sequence, read N- to C-terminus: Rik1-associated factor 2 (636 aa).

In terms of assembly, component of the Clr4 methyltransferase complex (ClrC) composed of at least clr4, rik1, pcu4, rbx1, raf1 and raf2. The cullin pcu4, rik1, raf1, raf2 and the ring-box protein rbx1 are components of an E3 ubiquitin ligase, whose activity is essential for heterochromatin assembly. Interacts with pcu4.

Its subcellular location is the cytoplasm. The protein resides in the mitochondrion. It is found in the nucleus. The protein localises to the chromosome. In terms of biological role, component of the Clr4 methyltransferase complex (ClrC) which contributes to the establishment of heterochromatin by specifically methylating histone H3 to form H3K9me. ClrC preferentially ubiquitylates H3K14 and ClrC-mediated H3 ubiquitination promotes clr4 methyltransferase activity for the methylation of H3K9. H3K9me represents a specific tag for epigenetic transcriptional repression by recruiting swi6/HP1 to methylated histones which leads to transcriptional silencing within centromeric heterochromatin, telomeric regions and at the silent mating-type loci. Has a role in both mitotic and meiotic chromosome segregation. The protein is Rik1-associated factor 2 (raf2) of Schizosaccharomyces pombe (strain 972 / ATCC 24843) (Fission yeast).